The chain runs to 139 residues: Large ribosomal subunit protein uL16 (139 aa).

Positions 1-13 (MLQPARRKYRKEQ) are enriched in basic residues. Residues 1-23 (MLQPARRKYRKEQKGRNTGISHS) are disordered.

It belongs to the universal ribosomal protein uL16 family. As to quaternary structure, part of the 50S ribosomal subunit.

Functionally, binds 23S rRNA and is also seen to make contacts with the A and possibly P site tRNAs. The protein is Large ribosomal subunit protein uL16 of Herminiimonas arsenicoxydans.